The chain runs to 163 residues: Nucleotide-binding protein CYA_0935 (163 aa).

The protein belongs to the YajQ family.

Nucleotide-binding protein. The sequence is that of Nucleotide-binding protein CYA_0935 from Synechococcus sp. (strain JA-3-3Ab) (Cyanobacteria bacterium Yellowstone A-Prime).